The sequence spans 489 residues: Glutamyl-tRNA(Gln) amidotransferase subunit A (489 aa).

Residues Lys-78 and Ser-153 each act as charge relay system in the active site. Residue Ser-177 is the Acyl-ester intermediate of the active site.

It belongs to the amidase family. GatA subfamily. Heterotrimer of A, B and C subunits.

The catalysed reaction is L-glutamyl-tRNA(Gln) + L-glutamine + ATP + H2O = L-glutaminyl-tRNA(Gln) + L-glutamate + ADP + phosphate + H(+). Functionally, allows the formation of correctly charged Gln-tRNA(Gln) through the transamidation of misacylated Glu-tRNA(Gln) in organisms which lack glutaminyl-tRNA synthetase. The reaction takes place in the presence of glutamine and ATP through an activated gamma-phospho-Glu-tRNA(Gln). This is Glutamyl-tRNA(Gln) amidotransferase subunit A from Enterococcus faecalis (strain ATCC 700802 / V583).